The chain runs to 296 residues: Phosphoribosylaminoimidazole-succinocarboxamide synthase (296 aa).

Belongs to the SAICAR synthetase family.

It catalyses the reaction 5-amino-1-(5-phospho-D-ribosyl)imidazole-4-carboxylate + L-aspartate + ATP = (2S)-2-[5-amino-1-(5-phospho-beta-D-ribosyl)imidazole-4-carboxamido]succinate + ADP + phosphate + 2 H(+). It functions in the pathway purine metabolism; IMP biosynthesis via de novo pathway; 5-amino-1-(5-phospho-D-ribosyl)imidazole-4-carboxamide from 5-amino-1-(5-phospho-D-ribosyl)imidazole-4-carboxylate: step 1/2. The chain is Phosphoribosylaminoimidazole-succinocarboxamide synthase from Trichlorobacter lovleyi (strain ATCC BAA-1151 / DSM 17278 / SZ) (Geobacter lovleyi).